Here is a 426-residue protein sequence, read N- to C-terminus: 4-hydroxy-3-methylbut-2-en-1-yl diphosphate synthase (flavodoxin) (426 aa).

Positions 1 to 20 (MLDRDLTLSDDAYESSPVSR) are disordered. Positions 320, 323, 366, and 373 each coordinate [4Fe-4S] cluster.

Belongs to the IspG family. The cofactor is [4Fe-4S] cluster.

The enzyme catalyses (2E)-4-hydroxy-3-methylbut-2-enyl diphosphate + oxidized [flavodoxin] + H2O + 2 H(+) = 2-C-methyl-D-erythritol 2,4-cyclic diphosphate + reduced [flavodoxin]. Its pathway is isoprenoid biosynthesis; isopentenyl diphosphate biosynthesis via DXP pathway; isopentenyl diphosphate from 1-deoxy-D-xylulose 5-phosphate: step 5/6. In terms of biological role, converts 2C-methyl-D-erythritol 2,4-cyclodiphosphate (ME-2,4cPP) into 1-hydroxy-2-methyl-2-(E)-butenyl 4-diphosphate. The polypeptide is 4-hydroxy-3-methylbut-2-en-1-yl diphosphate synthase (flavodoxin) (Wolbachia pipientis subsp. Culex pipiens (strain wPip)).